A 209-amino-acid chain; its full sequence is Ribosomal RNA large subunit methyltransferase E (209 aa).

S-adenosyl-L-methionine is bound by residues Gly63, Trp65, Asp83, Asp99, and Asp124. The active-site Proton acceptor is the Lys164.

Belongs to the class I-like SAM-binding methyltransferase superfamily. RNA methyltransferase RlmE family.

It localises to the cytoplasm. It carries out the reaction uridine(2552) in 23S rRNA + S-adenosyl-L-methionine = 2'-O-methyluridine(2552) in 23S rRNA + S-adenosyl-L-homocysteine + H(+). Specifically methylates the uridine in position 2552 of 23S rRNA at the 2'-O position of the ribose in the fully assembled 50S ribosomal subunit. This Shewanella oneidensis (strain ATCC 700550 / JCM 31522 / CIP 106686 / LMG 19005 / NCIMB 14063 / MR-1) protein is Ribosomal RNA large subunit methyltransferase E.